Consider the following 513-residue polypeptide: Na(+)/H(+) antiporter NhaB (513 aa).

12 consecutive transmembrane segments (helical) span residues 23–43 (LALI…PFVA), 52–72 (IFTL…LLAI), 97–117 (LLLM…LFIF), 120–140 (LLLS…AAAF), 144–164 (FLDA…FYGI), 202–222 (LMMH…VGEP), 238–258 (FFLR…LTCL), 303–323 (AIIG…VGLI), 348–368 (TESL…AVII), 391–411 (LFYI…VGTI), 447–467 (ATPN…APLI), and 475–495 (VWMA…CVEF).

It belongs to the NhaB Na(+)/H(+) (TC 2.A.34) antiporter family.

It localises to the cell inner membrane. It carries out the reaction 2 Na(+)(in) + 3 H(+)(out) = 2 Na(+)(out) + 3 H(+)(in). Functionally, na(+)/H(+) antiporter that extrudes sodium in exchange for external protons. In Shigella flexneri serotype 5b (strain 8401), this protein is Na(+)/H(+) antiporter NhaB.